The following is a 193-amino-acid chain: Putative F-box protein At1g31072 (193 aa).

The F-box domain occupies 4–53 (EKTLDSIPIDVFLDIFSRLPAKSVGRSCCVSNRWASILGSQDFKELFLTM).

In Arabidopsis thaliana (Mouse-ear cress), this protein is Putative F-box protein At1g31072.